The sequence spans 170 residues: Phosphopantetheine adenylyltransferase (170 aa).

T9 contributes to the substrate binding site. ATP is bound by residues 9–10 (TF) and H17. The substrate site is built by K41, L73, and R87. ATP contacts are provided by residues 88–90 (GLR), E98, and 123–129 (YQFISGT).

This sequence belongs to the bacterial CoaD family. As to quaternary structure, homohexamer. Mg(2+) serves as cofactor.

The protein resides in the cytoplasm. It carries out the reaction (R)-4'-phosphopantetheine + ATP + H(+) = 3'-dephospho-CoA + diphosphate. Its pathway is cofactor biosynthesis; coenzyme A biosynthesis; CoA from (R)-pantothenate: step 4/5. Reversibly transfers an adenylyl group from ATP to 4'-phosphopantetheine, yielding dephospho-CoA (dPCoA) and pyrophosphate. The protein is Phosphopantetheine adenylyltransferase of Bordetella petrii (strain ATCC BAA-461 / DSM 12804 / CCUG 43448).